The primary structure comprises 407 residues: E3 ubiquitin-protein ligase TRIM13 (407 aa).

The segment at 10 to 58 (CPICCSLFDDPRVLPCSHNFCKKCLEGLLEGNVRNSLWRPSPFKCPTCR) adopts an RING-type zinc-finger fold. The B box-type zinc-finger motif lies at 89-131 (PKMPVCKGHLGQPLNIFCVTDMQLICGICATRGEHTKHVFSSI). Positions 94, 97, 117, and 123 each coordinate Zn(2+). Positions 172 to 200 (LQLLTKDSDKVKEFFEKLQHTLDQKKNEI) form a coiled coil. A helical membrane pass occupies residues 316-336 (LLLMMVVLLGLLIFFGPTVFL).

This sequence belongs to the TRIM/RBCC family. In terms of assembly, interacts (via C-terminal domain) with VCP. Interacts with AKT1; the interaction ubiquitinates AKT1 and leads to its proteasomal degradation. Interacts with MDM2; the interaction ubiquitinates AKT1 and leads to its proteasomal degradation. Interacts with p62/SQSTM1. Interacts with TRAF6. Interacts with IKBKG/NEMO. Post-translationally, auto-ubiquitinated; requires the RING-type zinc finger. Auto-polyubiquitination leads to proteasomal degradation.

The protein localises to the endoplasmic reticulum membrane. The enzyme catalyses S-ubiquitinyl-[E2 ubiquitin-conjugating enzyme]-L-cysteine + [acceptor protein]-L-lysine = [E2 ubiquitin-conjugating enzyme]-L-cysteine + N(6)-ubiquitinyl-[acceptor protein]-L-lysine.. It participates in protein modification; protein ubiquitination. Endoplasmic reticulum (ER) membrane anchored E3 ligase involved in the retrotranslocation and turnover of membrane and secretory proteins from the ER through a set of processes named ER-associated degradation (ERAD). This process acts on misfolded proteins as well as in the regulated degradation of correctly folded proteins. Enhances ionizing radiation-induced p53/TP53 stability and apoptosis via ubiquitinating MDM2 and AKT1 and decreasing AKT1 kinase activity through MDM2 and AKT1 proteasomal degradation. Regulates ER stress-induced autophagy, and may act as a tumor suppressor. Also plays a role in innate immune response by stimulating NF-kappa-B activity in the TLR2 signaling pathway. Ubiquitinates TRAF6 via the 'Lys-29'-linked polyubiquitination chain resulting in NF-kappa-B activation. Participates as well in T-cell receptor-mediated NF-kappa-B activation. In the presence of TNF, modulates the IKK complex by regulating IKBKG/NEMO ubiquitination leading to the repression of NF-kappa-B. The sequence is that of E3 ubiquitin-protein ligase TRIM13 (Trim13) from Mus musculus (Mouse).